Consider the following 531-residue polypeptide: Poly(A)-specific ribonuclease PNLDC1 (531 aa).

Residues aspartate 28, glutamate 30, aspartate 271, and aspartate 365 each coordinate Mg(2+). Residues 506–526 (ITCLLQVCSIVTTWAMIAFLL) form a helical membrane-spanning segment.

It belongs to the CAF1 family. Requires Mg(2+) as cofactor. In terms of tissue distribution, specifically expressed in embryonic stem cells. Highly expressed in testis.

Its subcellular location is the endoplasmic reticulum membrane. The catalysed reaction is Exonucleolytic cleavage of poly(A) to 5'-AMP.. Its function is as follows. 3'-exoribonuclease that has a preference for poly(A) tails of mRNAs, thereby efficiently degrading poly(A) tails. Exonucleolytic degradation of the poly(A) tail is often the first step in the decay of eukaryotic mRNAs and is also used to silence certain maternal mRNAs translationally during oocyte maturation and early embryonic development. May act as a regulator of multipotency in embryonic stem cells. Is a critical factor for proper spermatogenesis, involved in pre-piRNAs processing to generate mature piRNAs. The chain is Poly(A)-specific ribonuclease PNLDC1 from Mus musculus (Mouse).